The chain runs to 521 residues: Probable feruloyl esterase B-2 (521 aa).

The first 19 residues, 1–19 (MKVSLWLTLLGVNLSLALA), serve as a signal peptide directing secretion. 5 N-linked (GlcNAc...) asparagine glycosylation sites follow: Asn-13, Asn-53, Asn-85, Asn-98, and Asn-138. Disulfide bonds link Cys-28–Cys-75 and Cys-63–Cys-114. 4 cysteine pairs are disulfide-bonded: Cys-187-Cys-440, Cys-257-Cys-274, Cys-283-Cys-291, and Cys-506-Cys-520. Residue Ser-188 is the Acyl-ester intermediate of the active site. Residue Asn-235 is glycosylated (N-linked (GlcNAc...) asparagine). Asp-258, Asp-261, Val-263, Asp-265, and Ile-267 together coordinate Ca(2+). Catalysis depends on Asp-399, which acts as the Charge relay system. Asn-419 carries an N-linked (GlcNAc...) asparagine glycan. His-439 serves as the catalytic Charge relay system.

Belongs to the tannase family.

It localises to the secreted. The catalysed reaction is feruloyl-polysaccharide + H2O = ferulate + polysaccharide.. Involved in degradation of plant cell walls. Hydrolyzes the feruloyl-arabinose ester bond in arabinoxylans as well as the feruloyl-galactose and feruloyl-arabinose ester bonds in pectin. The protein is Probable feruloyl esterase B-2 (faeB-2) of Aspergillus flavus (strain ATCC 200026 / FGSC A1120 / IAM 13836 / NRRL 3357 / JCM 12722 / SRRC 167).